A 486-amino-acid polypeptide reads, in one-letter code: Cobyric acid synthase (486 aa).

The 192-residue stretch at 248-439 (MLRVVVPVLP…VHGLFDTPAA (192 aa)) folds into the GATase cobBQ-type domain. The Nucleophile role is filled by C329. Residue H431 is part of the active site.

Belongs to the CobB/CobQ family. CobQ subfamily.

It participates in cofactor biosynthesis; adenosylcobalamin biosynthesis. Its function is as follows. Catalyzes amidations at positions B, D, E, and G on adenosylcobyrinic A,C-diamide. NH(2) groups are provided by glutamine, and one molecule of ATP is hydrogenolyzed for each amidation. The protein is Cobyric acid synthase of Paraburkholderia phytofirmans (strain DSM 17436 / LMG 22146 / PsJN) (Burkholderia phytofirmans).